Reading from the N-terminus, the 287-residue chain is uncharacterized protein (287 aa).

Helical transmembrane passes span 4–24, 36–56, 66–86, 93–113, 122–142, 148–168, 179–199, 208–228, 237–259, and 264–286; these read TTNGWINGFIGVLIFSGSLPA, FLTVCRAAIAGVLAGGLLLIF, LISLLVVAFGVVIGFPLLTAL, SAHAIVFIGLLPLATAVFGVL, VFWIFSAAGSLLVAGFALIQG, LGDAYMLASIVVCGLGYAEGA, VISWALVLSLPLMLPLSFFFT, VPALLSLAYVSLFSMLIGFVF, GIAAVGQLQLLQPFFGLLLASVI, and VGWALVAVNIAVIMCVAAARRFA. 2 consecutive EamA domains span residues 16 to 139 and 158 to 284; these read LIFS…GFAL and VVCG…AARR.

It belongs to the EamA transporter family.

The protein localises to the cell membrane. This is an uncharacterized protein from Bacillus subtilis (strain 168).